Reading from the N-terminus, the 560-residue chain is Diphtheria toxin homolog CRM228 (560 aa).

Residues 1-25 form the signal peptide; sequence MSRKLFASILIGALLGIGAPPSAHA. Residues His46 and Tyr90 each contribute to the NAD(+) site. The active site involves Glu173. Disulfide bonds link Cys211–Cys226 and Cys486–Cys496.

This Corynebacterium diphtheriae protein is Diphtheria toxin homolog CRM228.